The chain runs to 878 residues: Alanine--tRNA ligase (878 aa).

Zn(2+)-binding residues include H565, H569, C667, and H671.

This sequence belongs to the class-II aminoacyl-tRNA synthetase family. It depends on Zn(2+) as a cofactor.

The protein resides in the cytoplasm. It catalyses the reaction tRNA(Ala) + L-alanine + ATP = L-alanyl-tRNA(Ala) + AMP + diphosphate. Functionally, catalyzes the attachment of alanine to tRNA(Ala) in a two-step reaction: alanine is first activated by ATP to form Ala-AMP and then transferred to the acceptor end of tRNA(Ala). Also edits incorrectly charged Ser-tRNA(Ala) and Gly-tRNA(Ala) via its editing domain. The polypeptide is Alanine--tRNA ligase (Desulforamulus reducens (strain ATCC BAA-1160 / DSM 100696 / MI-1) (Desulfotomaculum reducens)).